Consider the following 360-residue polypeptide: Histidinol-phosphate aminotransferase (360 aa).

Residue lysine 224 is modified to N6-(pyridoxal phosphate)lysine.

The protein belongs to the class-II pyridoxal-phosphate-dependent aminotransferase family. Histidinol-phosphate aminotransferase subfamily. Pyridoxal 5'-phosphate is required as a cofactor.

It catalyses the reaction L-histidinol phosphate + 2-oxoglutarate = 3-(imidazol-4-yl)-2-oxopropyl phosphate + L-glutamate. The protein operates within amino-acid biosynthesis; L-histidine biosynthesis; L-histidine from 5-phospho-alpha-D-ribose 1-diphosphate: step 7/9. This Methanococcoides burtonii (strain DSM 6242 / NBRC 107633 / OCM 468 / ACE-M) protein is Histidinol-phosphate aminotransferase.